A 310-amino-acid chain; its full sequence is tRNA dimethylallyltransferase (310 aa).

Residue 10–17 participates in ATP binding; it reads GPTAVGKS. 12-17 lines the substrate pocket; sequence TAVGKS. An interaction with substrate tRNA region spans residues 35-38; it reads DSMQ.

This sequence belongs to the IPP transferase family. As to quaternary structure, monomer. It depends on Mg(2+) as a cofactor.

It carries out the reaction adenosine(37) in tRNA + dimethylallyl diphosphate = N(6)-dimethylallyladenosine(37) in tRNA + diphosphate. Functionally, catalyzes the transfer of a dimethylallyl group onto the adenine at position 37 in tRNAs that read codons beginning with uridine, leading to the formation of N6-(dimethylallyl)adenosine (i(6)A). This is tRNA dimethylallyltransferase from Clostridium perfringens (strain 13 / Type A).